A 272-amino-acid chain; its full sequence is Biglycan (272 aa).

Positions Met1–Ala16 are cleaved as a signal peptide. Positions Leu17–Asn37 are excised as a propeptide. Ser42 and Ser48 each carry an O-linked (Xyl...) (glycosaminoglycan) serine glycan. The LRRNT domain maps to Ala55–Pro91. 2 cysteine pairs are disulfide-bonded: Cys64–Cys70 and Cys68–Cys77. LRR repeat units follow at residues Asp92 to Gly113, His116 to Pro137, Asp138 to Glu161, Thr162 to Arg183, Lys186 to Pro209, Thr210 to Lys232, Leu233 to Pro254, and Val255 to Asn272.

This sequence belongs to the small leucine-rich proteoglycan (SLRP) family. SLRP class I subfamily. Homodimer. Forms a ternary complex with MFAP2 and ELN. Post-translationally, the two attached glycosaminoglycan chains can be either chondroitin sulfate or dermatan sulfate. In terms of tissue distribution, found in several connective tissues, especially in articular cartilages.

The protein resides in the secreted. The protein localises to the extracellular space. It localises to the extracellular matrix. In terms of biological role, may be involved in collagen fiber assembly. The chain is Biglycan (BGN) from Sus scrofa (Pig).